Reading from the N-terminus, the 320-residue chain is Aminoacyl tRNA synthase complex-interacting multifunctional protein 2 (320 aa).

Positions 31–51 (HSKTTSPATDAGHVQEPSEPS) are disordered. Residue S36 is modified to Phosphoserine. The tract at residues 82 to 162 (TPDADLDVTN…HTHSSVKNVP (81 aa)) is interaction with PRKN. The interaction with TP53 stretch occupies residues 162-225 (PENLLKCFGE…FLFSLFGQKH (64 aa)). The 98-residue stretch at 220–317 (LFGQKHNAVH…NLAPFSTALQ (98 aa)) folds into the GST C-terminal domain.

In terms of assembly, part of the multisynthetase complex (MSC), a multisubunit complex that groups tRNA ligases for Arg (RARS1), Asp (DARS1), Gln (QARS1), Ile (IARS1), Leu (LARS1), Lys (KARS1), Met (MARS1) the bifunctional ligase for Glu and Pro (EPRS1) and the auxiliary subunits AIMP1/p43, AIMP2/p38 and EEF1E1/p18. Interacts (via N-terminus) with KARS1. Interacts with EPRS1. Forms a linear complex that contains MARS1, EEF1E1, EPRS1 and AIMP2 that is at the core of the multisubunit complex. Binds FUBP1 (via C-terminus). Interacts in both its unphosphorylated and phosphorylated forms with p53/TP53 (via N-terminus) in the nucleus following UV irradiation. Interacts (via N-terminus) with PRKN/parkin (via first RING-type domain). Interacts with TARS3. Post-translationally, phosphorylated on serine residues in response to UV irradiation. In terms of processing, ubiquitinated by PRKN, leading to its degradation by the proteasome.

It localises to the cytoplasm. The protein localises to the cytosol. It is found in the nucleus. In terms of biological role, required for assembly and stability of the aminoacyl-tRNA synthase complex. Mediates ubiquitination and degradation of FUBP1, a transcriptional activator of MYC, leading to MYC down-regulation which is required for aveolar type II cell differentiation. Blocks MDM2-mediated ubiquitination and degradation of p53/TP53. Functions as a proapoptotic factor. The chain is Aminoacyl tRNA synthase complex-interacting multifunctional protein 2 (Aimp2) from Rattus norvegicus (Rat).